Consider the following 283-residue polypeptide: Adenosyl-chloride synthase (283 aa).

Substrate is bound by residues aspartate 11, 70-72 (YVY), and 128-131 (TWYG). Glycine 131 is a chloride binding site.

It belongs to the SAM hydrolase / SAM-dependent halogenase family. In terms of assembly, homotrimer.

It catalyses the reaction chloride + S-adenosyl-L-methionine = 5'-chloro-5'-deoxyadenosine + L-methionine. In terms of biological role, involved in the biosynthesis of the proteosome inhibitor salinosporamide A (SalA). Catalyzes the halogenation of S-adenosyl-L-methionine (SAM) with chloride to generate 5'-chloro-5'-deoxyadenosine (5'-CIDA) and L-methionine. It can also use bromide and iodide, producing halogenated 5'-deoxyadenosine (5'-XDA) and L-methionine, however no halogenase activity is detected in the presence of fluoride. The chain is Adenosyl-chloride synthase from Salinispora tropica (strain ATCC BAA-916 / DSM 44818 / JCM 13857 / NBRC 105044 / CNB-440).